The chain runs to 447 residues: Blue-light photoreceptor PHR2 (447 aa).

Residues 1 to 14 (MDSSNVEENLNPET) are compositionally biased toward polar residues. Residues 1-20 (MDSSNVEENLNPETKSAEEQ) are disordered. One can recognise a Photolyase/cryptochrome alpha/beta domain in the interval 115–249 (RAAVVWFRND…EVKYFWGSTL (135 aa)).

The protein belongs to the DNA photolyase class-1 family. FAD is required as a cofactor.

The protein is Blue-light photoreceptor PHR2 (PHR2) of Arabidopsis thaliana (Mouse-ear cress).